A 395-amino-acid polypeptide reads, in one-letter code: Elongation factor Tu (395 aa).

In terms of domain architecture, tr-type G spans 10-204 (KPHLNIGTIG…TVDNYIKEPI (195 aa)). A G1 region spans residues 19–26 (GHVDHGKT). 19–26 (GHVDHGKT) contributes to the GTP binding site. Position 26 (Thr26) interacts with Mg(2+). The interval 60 to 64 (GITIN) is G2. The segment at 81-84 (DCPG) is G3. Residues 81 to 85 (DCPGH) and 136 to 139 (NKVD) each bind GTP. Positions 136-139 (NKVD) are G4. Residues 174–176 (SAL) form a G5 region.

It belongs to the TRAFAC class translation factor GTPase superfamily. Classic translation factor GTPase family. EF-Tu/EF-1A subfamily. Monomer.

The protein localises to the cytoplasm. It catalyses the reaction GTP + H2O = GDP + phosphate + H(+). Functionally, GTP hydrolase that promotes the GTP-dependent binding of aminoacyl-tRNA to the A-site of ribosomes during protein biosynthesis. The chain is Elongation factor Tu from Karelsulcia muelleri (strain GWSS) (Sulcia muelleri).